Consider the following 415-residue polypeptide: Homoserine O-succinyltransferase (415 aa).

An AB hydrolase-1 domain is found at 69 to 383 (NAVLVCHALN…PHGHDAFLLD (315 aa)). Serine 175 serves as the catalytic Nucleophile. Position 245 (arginine 245) interacts with substrate. Residues aspartate 344 and histidine 377 contribute to the active site. Position 378 (aspartate 378) interacts with substrate.

It belongs to the AB hydrolase superfamily. MetX family. As to quaternary structure, homodimer.

It localises to the cytoplasm. The catalysed reaction is L-homoserine + succinyl-CoA = O-succinyl-L-homoserine + CoA. It functions in the pathway amino-acid biosynthesis; L-methionine biosynthesis via de novo pathway; O-succinyl-L-homoserine from L-homoserine: step 1/1. Functionally, transfers a succinyl group from succinyl-CoA to L-homoserine, forming succinyl-L-homoserine. This is Homoserine O-succinyltransferase from Bordetella pertussis (strain Tohama I / ATCC BAA-589 / NCTC 13251).